A 196-amino-acid polypeptide reads, in one-letter code: Large ribosomal subunit protein uL18 (196 aa).

It belongs to the universal ribosomal protein uL18 family. In terms of assembly, part of the 50S ribosomal subunit. Contacts the 5S and 23S rRNAs.

Its function is as follows. This is one of the proteins that bind and probably mediate the attachment of the 5S RNA into the large ribosomal subunit, where it forms part of the central protuberance. This chain is Large ribosomal subunit protein uL18, found in Saccharolobus islandicus (strain Y.N.15.51 / Yellowstone #2) (Sulfolobus islandicus).